The primary structure comprises 623 residues: uncharacterized protein (623 aa).

A run of 5 helical transmembrane segments spans residues 242-262 (IVLA…ITWL), 288-308 (IVSP…LDIF), 318-338 (VSMW…IALF), 361-381 (VINL…LLGV), and 387-407 (FNVS…ALAV).

This sequence belongs to the MscS (TC 1.A.23) family.

Its subcellular location is the cell membrane. This is an uncharacterized protein from Helicobacter pylori (strain ATCC 700392 / 26695) (Campylobacter pylori).